Reading from the N-terminus, the 380-residue chain is Polygalacturonase 2 (380 aa).

The N-terminal stretch at 1-20 is a signal peptide; sequence MIAGSKLLMLGLFGALAVHA. Residues 21 to 38 constitute a propeptide that is removed on maturation; sequence LPEPAKAQVTAAPKLEER. Cysteines 42 and 60 form a disulfide. 2 PbH1 repeats span residues 173-204 and 205-226; these read ATDL…DVGS and STGI…AVNS. The active-site Proton donor is the Asp219. Cys221 and Cys237 form a disulfide bridge. His241 is an active-site residue. PbH1 repeat units lie at residues 256–277, 285–307, and 319–364; these read VANV…RIKT, VKNV…VIEQ, and TDGV…SVSG. Asn287 carries an N-linked (GlcNAc...) asparagine glycan. Cystine bridges form between Cys347/Cys352 and Cys371/Cys380.

The protein belongs to the glycosyl hydrolase 28 family.

Its subcellular location is the secreted. It carries out the reaction (1,4-alpha-D-galacturonosyl)n+m + H2O = (1,4-alpha-D-galacturonosyl)n + (1,4-alpha-D-galacturonosyl)m.. The protein is Polygalacturonase 2 (PG2) of Penicillium olsonii.